The chain runs to 55 residues: uncharacterized protein (55 aa).

The protein localises to the plastid. This is an uncharacterized protein from Cuscuta reflexa (Southern Asian dodder).